The chain runs to 454 residues: MESVGHSLLTLSVLCPVGALLLCWVGSVLLGAGLLPSLTLSTRDPSTTLSRTPWLVVLVPLLVLWGWRWLSRPMELLRSPEEVGYIPERGRSRAQTANLVRRRRMKGELPPIYPNGWYRALDSHLLPPGTVQDCTLLGEQLAVYRTLEGKVYVVDAYCPHLGANLAVGGKVVGDCIECPFHGWQFRGEDGKCTRIPYAEKVPDFAKIKTRPSCELNGMVFVWYHCDGIEPTWSVPEQEEITKKEWVYHGRTEHYVNAHIEEIPENAADIAHLDFLHTPGILSGVDLRYTKSRIWDFVKHSWKVQWIPEPAPNKHCSQMLLAHSILLFGKHFPLLDVNVVARQVGPGIVFLHFKHAFLGEGVIVHCVTPVEPLLQKVSHSIYYQKNIPALIPKFILKAECIQFERDVMIWNNKKYISKPMLVKEDAAIQKHRRWFSQFYSNNSPQITFQQEGLDW.

The next 2 helical transmembrane spans lie at 13-33 (VLCP…LGAG) and 47-67 (TTLS…LWGW). The Rieske domain occupies 117-221 (WYRALDSHLL…SCELNGMVFV (105 aa)). The [2Fe-2S] cluster site is built by Cys-158, His-160, Cys-178, and His-181.

Belongs to the cholesterol 7-desaturase family. [2Fe-2S] cluster is required as a cofactor.

It localises to the membrane. The catalysed reaction is cholesterol + NADPH + O2 + H(+) = 7-dehydrocholesterol + NADP(+) + 2 H2O. It carries out the reaction cholesterol + NADH + O2 + H(+) = 7-dehydrocholesterol + NAD(+) + 2 H2O. It participates in steroid hormone biosynthesis; dafachronic acid biosynthesis. Its function is as follows. Catalyzes the production of 7-dehydrocholesterol (7-DHC or cholesta-5,7-dien-3beta-ol) by inserting a double bond (desaturating) at the C7-C8 single bond of cholesterol. This reaction is the first step in the synthesis of the steroid hormone Delta(7)-dafachronic acid. The sequence is that of Cholesterol 7-desaturase nvd (nvd) from Xenopus laevis (African clawed frog).